Reading from the N-terminus, the 210-residue chain is FMN-dependent NADH:quinone oxidoreductase (210 aa).

FMN-binding positions include 17 to 19 (SRS), 102 to 105 (MWNL), and 148 to 151 (SCGG).

Belongs to the azoreductase type 1 family. As to quaternary structure, homodimer. It depends on FMN as a cofactor.

It carries out the reaction 2 a quinone + NADH + H(+) = 2 a 1,4-benzosemiquinone + NAD(+). The catalysed reaction is N,N-dimethyl-1,4-phenylenediamine + anthranilate + 2 NAD(+) = 2-(4-dimethylaminophenyl)diazenylbenzoate + 2 NADH + 2 H(+). In terms of biological role, quinone reductase that provides resistance to thiol-specific stress caused by electrophilic quinones. Its function is as follows. Also exhibits azoreductase activity. Catalyzes the reductive cleavage of the azo bond in aromatic azo compounds to the corresponding amines. This Trichlorobacter lovleyi (strain ATCC BAA-1151 / DSM 17278 / SZ) (Geobacter lovleyi) protein is FMN-dependent NADH:quinone oxidoreductase.